The primary structure comprises 174 residues: MNHDKSPIILIGFMGTGKSTIGKYVADEQNLSFIDIDSYIEEKYKLTIPEIFSKHGEQYFRNLEFTCLQECINTADIIATGGGIIESEEAFNFLKNQKNIIWLDCNIDIIYSRINDDPHRPNANNKTIKQLNDLYCSRILRYNEIAFKKFDSHLLSISEIYYELLNLIKASDQY.

15 to 20 (GTGKST) provides a ligand contact to ATP. Residue Ser-19 coordinates Mg(2+). Substrate-binding residues include Asp-37, Arg-61, and Gly-82. Residue Arg-120 coordinates ATP. Residue Arg-138 coordinates substrate.

Belongs to the shikimate kinase family. As to quaternary structure, monomer. It depends on Mg(2+) as a cofactor.

The protein resides in the cytoplasm. It catalyses the reaction shikimate + ATP = 3-phosphoshikimate + ADP + H(+). The protein operates within metabolic intermediate biosynthesis; chorismate biosynthesis; chorismate from D-erythrose 4-phosphate and phosphoenolpyruvate: step 5/7. In terms of biological role, catalyzes the specific phosphorylation of the 3-hydroxyl group of shikimic acid using ATP as a cosubstrate. The sequence is that of Shikimate kinase from Staphylococcus aureus (strain Mu3 / ATCC 700698).